A 361-amino-acid polypeptide reads, in one-letter code: Pseudouridine-5'-phosphate glycosidase (361 aa).

Catalysis depends on Glu27, which acts as the Proton donor. Lys88 and Val108 together coordinate substrate. Asp140 is a binding site for Mn(2+). A substrate-binding site is contributed by Ser142 to Asp144. Lys161 functions as the Nucleophile in the catalytic mechanism. The tract at residues Asp306–Pro361 is disordered. Over residues Pro312 to Ala333 the composition is skewed to pro residues. Over residues Ala334–Ala354 the composition is skewed to low complexity.

Belongs to the pseudouridine-5'-phosphate glycosidase family. In terms of assembly, homotrimer. It depends on Mn(2+) as a cofactor.

It carries out the reaction D-ribose 5-phosphate + uracil = psi-UMP + H2O. Its function is as follows. Catalyzes the reversible cleavage of pseudouridine 5'-phosphate (PsiMP) to ribose 5-phosphate and uracil. Functions biologically in the cleavage direction, as part of a pseudouridine degradation pathway. In Frankia alni (strain DSM 45986 / CECT 9034 / ACN14a), this protein is Pseudouridine-5'-phosphate glycosidase.